The sequence spans 467 residues: DNA repair protein RadA (467 aa).

A C4-type zinc finger spans residues 10-27; that stretch reads CQNCGAVHSRWAGKCDSC. 98–105 is a binding site for ATP; it reads GDPGIGKS. Positions 260-264 match the RadA KNRFG motif motif; that stretch reads KNRFG. The interval 359–467 is lon-protease-like; sequence DVYLNVAGGY…RIAASGAGKK (109 aa).

It belongs to the RecA family. RadA subfamily.

Functionally, DNA-dependent ATPase involved in processing of recombination intermediates, plays a role in repairing DNA breaks. Stimulates the branch migration of RecA-mediated strand transfer reactions, allowing the 3' invading strand to extend heteroduplex DNA faster. Binds ssDNA in the presence of ADP but not other nucleotides, has ATPase activity that is stimulated by ssDNA and various branched DNA structures, but inhibited by SSB. Does not have RecA's homology-searching function. In Brucella abortus (strain 2308), this protein is DNA repair protein RadA.